The chain runs to 263 residues: uncharacterized protein (263 aa).

16–23 provides a ligand contact to ATP; sequence AKGGTGKT.

The protein to M.jannaschii MJ0547 and MJ0169.

This is an uncharacterized protein from Methanocaldococcus jannaschii (strain ATCC 43067 / DSM 2661 / JAL-1 / JCM 10045 / NBRC 100440) (Methanococcus jannaschii).